The following is a 732-amino-acid chain: Aldehyde oxidoreductase molybdenum-binding subunit PaoC (732 aa).

Mo-molybdopterin cytosine dinucleotide is bound by residues 241-242 (GF), 468-470 (IGT), 511-512 (GA), 615-621 (RILNPKT), glutamine 625, and 688-691 (KGVG). Glutamate 692 (proton acceptor) is an active-site residue.

The protein belongs to the xanthine dehydrogenase family. In terms of assembly, heterotrimer composed of PaoA, PaoB and PaoC. Requires Mo-molybdopterin cytosine dinucleotide as cofactor.

Its subcellular location is the periplasm. It catalyses the reaction an aldehyde + A + H2O = a carboxylate + AH2 + H(+). Its activity is regulated as follows. The complex requires PaoD for activity. In terms of biological role, oxidizes aldehydes to the corresponding carboxylic acids with a preference for aromatic aldehydes. It might play a role in the detoxification of aldehydes to avoid cell damage. The protein is Aldehyde oxidoreductase molybdenum-binding subunit PaoC of Escherichia coli (strain K12).